A 118-amino-acid polypeptide reads, in one-letter code: Non-specific lipid-transfer protein 3 (118 aa).

An N-terminal signal peptide occupies residues 1-25 (MARAAATQLVLVAMVAAMLLVATDA). 4 cysteine pairs are disulfide-bonded: Cys29/Cys77, Cys39/Cys54, Cys55/Cys100, and Cys75/Cys114.

It belongs to the plant LTP family.

Its function is as follows. Plant non-specific lipid-transfer proteins transfer phospholipids as well as galactolipids across membranes. May play a role in wax or cutin deposition in the cell walls of expanding epidermal cells and certain secretory tissues. This Hordeum vulgare (Barley) protein is Non-specific lipid-transfer protein 3 (LTP3).